Consider the following 476-residue polypeptide: Protein DETOXIFICATION 1 (476 aa).

The next 12 helical transmembrane spans lie at 35-55, 66-86, 117-137, 146-166, 184-204, 208-228, 260-280, 289-309, 331-351, 370-390, 402-422, and 433-453; these read AAPMATVTIAQYLLPVISVMV, GVALANSFTNVTGFSIMCGLV, IPICFLISILWLYIEKILISL, IAGSYAFWLIPALFGQAIVIP, AVTTLLFHVLVCWTLVFLFGL, GPAMATSVSFWFYAVILSCYV, AAMICLEWWLFEILILCSGLL, VLSICLTIETLHYVISAGVAA, VLAGLCLWIVESAFFSILLFT, VADLTPLLCLSFILDGFTAVL, IGAWNNTVSYYLVGAPVGIYL, and LWCGVVVGSTVQATILAIVTA.

This sequence belongs to the multi antimicrobial extrusion (MATE) (TC 2.A.66.1) family. As to expression, ubiquitous. Highest expression in flowers and stems.

It localises to the cell membrane. Efflux carrier for plant-derived alkaloids, antibiotics, heavy metal and other toxic compounds. Involved in cadmium detoxification. Requires probably a proton-motive force for the efflux. The polypeptide is Protein DETOXIFICATION 1 (Arabidopsis thaliana (Mouse-ear cress)).